The primary structure comprises 178 residues: ATP synthase subunit delta (178 aa).

Belongs to the ATPase delta chain family. F-type ATPases have 2 components, F(1) - the catalytic core - and F(0) - the membrane proton channel. F(1) has five subunits: alpha(3), beta(3), gamma(1), delta(1), epsilon(1). F(0) has three main subunits: a(1), b(2) and c(10-14). The alpha and beta chains form an alternating ring which encloses part of the gamma chain. F(1) is attached to F(0) by a central stalk formed by the gamma and epsilon chains, while a peripheral stalk is formed by the delta and b chains.

Its subcellular location is the cell inner membrane. In terms of biological role, f(1)F(0) ATP synthase produces ATP from ADP in the presence of a proton or sodium gradient. F-type ATPases consist of two structural domains, F(1) containing the extramembraneous catalytic core and F(0) containing the membrane proton channel, linked together by a central stalk and a peripheral stalk. During catalysis, ATP synthesis in the catalytic domain of F(1) is coupled via a rotary mechanism of the central stalk subunits to proton translocation. Its function is as follows. This protein is part of the stalk that links CF(0) to CF(1). It either transmits conformational changes from CF(0) to CF(1) or is implicated in proton conduction. The chain is ATP synthase subunit delta from Marinomonas sp. (strain MWYL1).